The following is a 65-amino-acid chain: Weak neurotoxin 7 (65 aa).

Intrachain disulfides connect Cys3-Cys24, Cys6-Cys11, Cys17-Cys42, Cys46-Cys57, and Cys58-Cys63.

Belongs to the three-finger toxin family. Ancestral subfamily. Orphan group II sub-subfamily. Expressed by the venom gland.

Its subcellular location is the secreted. Binds with low affinity to muscular (alpha-1-beta-1-delta-epsilon/CHRNA1-CHRNB1-CHRND-CHRNE) and very low affinity to neuronal (alpha-7/CHRNA7) nicotinic acetylcholine receptor (nAChR). The sequence is that of Weak neurotoxin 7 from Naja naja (Indian cobra).